A 417-amino-acid polypeptide reads, in one-letter code: Putative competence-damage inducible protein (417 aa).

The protein belongs to the CinA family.

The polypeptide is Putative competence-damage inducible protein (Shouchella clausii (strain KSM-K16) (Alkalihalobacillus clausii)).